The primary structure comprises 462 residues: MQEGKISQIIGPVVDVDFPEGRLPSILDALTVTRADGTKLVLETQQHLGEERVRTVAMESTDGLVRGMNVTHTGKPIQVPVGLEVLGRMLNVVGDPIDGRGPVNTKKSYSIHRLAPRFDEISTKAEMFETGIKVIDLLEPYSRGGKTGLFGGAGVGKTVLIMELINNIAKQQSGFSVFAGVGERTREGNDLWHEMMESGVIDKTALVFGQMNEPPGARQRVALTGLSIAEYFRDEEGRDVLLFIDNIFRFTQAGSEVSALLGRMPSAVGYQPTLATEMGELQDRIVSTKKGSVTSVQAIYVPADDLTDPAPATAFAHLDATTVLSRSIAELGIYPAVDPLDSTSRILDPNIVGDDHYDTAQAVKQLLQRYKDLQDIIAILGMDELSDEDKLVVSRARKVQRFLSQPFFVAEAFTGLAGKYVKLEETIKGFKEIIAGRHDNLPESAFYLVGTIEEAVEKAKTL.

Residue 151-158 coordinates ATP; it reads GGAGVGKT.

This sequence belongs to the ATPase alpha/beta chains family. F-type ATPases have 2 components, CF(1) - the catalytic core - and CF(0) - the membrane proton channel. CF(1) has five subunits: alpha(3), beta(3), gamma(1), delta(1), epsilon(1). CF(0) has four main subunits: a(1), b(1), b'(1) and c(9-12).

The protein localises to the cell inner membrane. The enzyme catalyses ATP + H2O + 4 H(+)(in) = ADP + phosphate + 5 H(+)(out). Its function is as follows. Produces ATP from ADP in the presence of a proton gradient across the membrane. The catalytic sites are hosted primarily by the beta subunits. The polypeptide is ATP synthase subunit beta (Pelodictyon phaeoclathratiforme (strain DSM 5477 / BU-1)).